The primary structure comprises 129 residues: Large ribosomal subunit protein bL21 (129 aa).

The segment at 102–129 (TDNAKPTKGPRPKKEKVAKEATKEDAAA) is disordered. A compositionally biased stretch (basic and acidic residues) spans 116–129 (EKVAKEATKEDAAA).

It belongs to the bacterial ribosomal protein bL21 family. In terms of assembly, part of the 50S ribosomal subunit. Contacts protein L20.

This protein binds to 23S rRNA in the presence of protein L20. This Bradyrhizobium diazoefficiens (strain JCM 10833 / BCRC 13528 / IAM 13628 / NBRC 14792 / USDA 110) protein is Large ribosomal subunit protein bL21.